The following is a 215-amino-acid chain: Cytokinin riboside 5'-monophosphate phosphoribohydrolase LOG4 (215 aa).

Substrate-binding positions include Glu-84, 102 to 103 (RK), 119 to 125 (GYGTLEE), and Thr-131.

Belongs to the LOG family. Expressed in roots and shoots. Detected in root procambium, lateral root primordia, vascular tissues of cotyledons, leaves and stems, shoot apical meristem, axillary buds, young inflorescences, fruit abscission zones and basal part of ovules.

The protein resides in the cytoplasm. Its subcellular location is the nucleus. The catalysed reaction is N(6)-(dimethylallyl)adenosine 5'-phosphate + H2O = N(6)-dimethylallyladenine + D-ribose 5-phosphate. It carries out the reaction 9-ribosyl-trans-zeatin 5'-phosphate + H2O = trans-zeatin + D-ribose 5-phosphate. In terms of biological role, cytokinin-activating enzyme working in the direct activation pathway. Phosphoribohydrolase that converts inactive cytokinin nucleotides to the biologically active free-base forms. This is Cytokinin riboside 5'-monophosphate phosphoribohydrolase LOG4 (LOG4) from Arabidopsis thaliana (Mouse-ear cress).